We begin with the raw amino-acid sequence, 443 residues long: 23S rRNA (uracil(1939)-C(5))-methyltransferase RlmD (443 aa).

Residues 4–66 enclose the TRAM domain; the sequence is QNRFDRTSFQ…RHFDEARVVE (63 aa). 4 residues coordinate [4Fe-4S] cluster: Cys79, Cys85, Cys88, and Cys167. S-adenosyl-L-methionine-binding residues include Gln275, Phe304, Asn309, Glu325, Asp352, and Asp373. Cys399 acts as the Nucleophile in catalysis.

It belongs to the class I-like SAM-binding methyltransferase superfamily. RNA M5U methyltransferase family. RlmD subfamily.

It carries out the reaction uridine(1939) in 23S rRNA + S-adenosyl-L-methionine = 5-methyluridine(1939) in 23S rRNA + S-adenosyl-L-homocysteine + H(+). Catalyzes the formation of 5-methyl-uridine at position 1939 (m5U1939) in 23S rRNA. The polypeptide is 23S rRNA (uracil(1939)-C(5))-methyltransferase RlmD (Xylella fastidiosa (strain Temecula1 / ATCC 700964)).